Reading from the N-terminus, the 690-residue chain is Elongation factor G (690 aa).

The tr-type G domain maps to 8–283; sequence EDYRNFGIMA…AVVDYLPSPV (276 aa). GTP is bound by residues 17–24, 81–85, and 135–138; these read AHIDAGKT, DTPGH, and NKMD.

It belongs to the TRAFAC class translation factor GTPase superfamily. Classic translation factor GTPase family. EF-G/EF-2 subfamily.

It is found in the cytoplasm. Its function is as follows. Catalyzes the GTP-dependent ribosomal translocation step during translation elongation. During this step, the ribosome changes from the pre-translocational (PRE) to the post-translocational (POST) state as the newly formed A-site-bound peptidyl-tRNA and P-site-bound deacylated tRNA move to the P and E sites, respectively. Catalyzes the coordinated movement of the two tRNA molecules, the mRNA and conformational changes in the ribosome. The sequence is that of Elongation factor G from Rhodopseudomonas palustris (strain BisB18).